The sequence spans 152 residues: Ribosomal RNA large subunit methyltransferase H (152 aa).

S-adenosyl-L-methionine is bound by residues L68, G100, and 119-124; that span reads FGPMTW.

The protein belongs to the RNA methyltransferase RlmH family. Homodimer.

The protein resides in the cytoplasm. The enzyme catalyses pseudouridine(1915) in 23S rRNA + S-adenosyl-L-methionine = N(3)-methylpseudouridine(1915) in 23S rRNA + S-adenosyl-L-homocysteine + H(+). Functionally, specifically methylates the pseudouridine at position 1915 (m3Psi1915) in 23S rRNA. This chain is Ribosomal RNA large subunit methyltransferase H, found in Rhodospirillum centenum (strain ATCC 51521 / SW).